The following is a 514-amino-acid chain: Coiled-coil domain-containing protein 174 (514 aa).

Disordered stretches follow at residues 42 to 83 (AKPK…DQSR) and 137 to 162 (TLEK…PDEE). Over residues 63–83 (KRAEKDIEQKAEEDQTLDQSR) the composition is skewed to basic and acidic residues. Residues 66–98 (EKDIEQKAEEDQTLDQSRKKLEEKAKLYEKMTK) are a coiled coil. Residues 141–162 (ETDDEEIEPEMEIPPPEDPDEE) show a composition bias toward acidic residues. 2 coiled-coil regions span residues 203–227 (LLSE…ALRK) and 266–321 (LDML…LENG). 2 disordered regions span residues 270-291 (REQT…KAAL) and 306-490 (LREE…PSAH). 2 stretches are compositionally biased toward basic and acidic residues: residues 335 to 354 (EVPR…RDTK) and 376 to 388 (KKQE…RDPE). Positions 405–418 (YSSQNLNSPETSPG) are enriched in polar residues. Residues 420 to 429 (TEPEISENQK) show a composition bias toward basic and acidic residues.

It is found in the nucleus. Functionally, probably involved in neuronal development. This is Coiled-coil domain-containing protein 174 (CCDC174) from Gallus gallus (Chicken).